The chain runs to 240 residues: Lactate utilization protein C (240 aa).

This sequence belongs to the LutC/YkgG family.

Functionally, is involved in L-lactate degradation and allows cells to grow with lactate as the sole carbon source. In Bacillus pumilus (strain SAFR-032), this protein is Lactate utilization protein C.